A 181-amino-acid polypeptide reads, in one-letter code: Adenylate kinase (181 aa).

10–15 (GAGKGT) provides a ligand contact to ATP. Positions 30–59 (STGELFRRNIEKDTKLGHEAKKYLDAGDLV) are NMP. Residues Thr-31, Arg-36, 57–59 (DLV), 85–88 (GYPR), and Gln-92 each bind AMP. Positions 126–132 (GRGRADD) are LID. Arg-127 contributes to the ATP binding site. AMP-binding residues include Arg-129 and Arg-140. Gly-166 is an ATP binding site.

This sequence belongs to the adenylate kinase family. As to quaternary structure, monomer.

It localises to the cytoplasm. The catalysed reaction is AMP + ATP = 2 ADP. It participates in purine metabolism; AMP biosynthesis via salvage pathway; AMP from ADP: step 1/1. Its function is as follows. Catalyzes the reversible transfer of the terminal phosphate group between ATP and AMP. Plays an important role in cellular energy homeostasis and in adenine nucleotide metabolism. This chain is Adenylate kinase, found in Mycobacterium leprae (strain Br4923).